The sequence spans 84 residues: Hepcidin (84 aa).

Residues 1-24 form the signal peptide; it reads MALSSQIWAACLLLLLLLASLTSG. Positions 25-54 are excised as a propeptide; that stretch reads SVFPQQTGQLAELQPQDRAGARASWMPMFQ. Disulfide bonds link cysteine 66–cysteine 82, cysteine 69–cysteine 72, cysteine 70–cysteine 78, and cysteine 73–cysteine 81.

This sequence belongs to the hepcidin family. As to quaternary structure, interacts with SLC40A1; this interaction promotes SLC40A1 rapid ubiquitination. Highest expression in liver and to a lesser extent in heart and brain. Low levels in lung, tonsils, salivary gland, trachea, prostate gland, adrenal gland and thyroid gland. Secreted into the urine and blood. Expressed by hepatocytes.

It localises to the secreted. Its function is as follows. Liver-produced hormone that constitutes the main circulating regulator of iron absorption and distribution across tissues. Acts by promoting endocytosis and degradation of ferroportin/SLC40A1, leading to the retention of iron in iron-exporting cells and decreased flow of iron into plasma. Controls the major flows of iron into plasma: absorption of dietary iron in the intestine, recycling of iron by macrophages, which phagocytose old erythrocytes and other cells, and mobilization of stored iron from hepatocytes. In terms of biological role, has strong antimicrobial activity against E.coli ML35P N.cinerea and weaker against S.epidermidis, S.aureus and group b streptococcus bacteria. Active against the fungus C.albicans. No activity against P.aeruginosa. This is Hepcidin from Homo sapiens (Human).